A 293-amino-acid polypeptide reads, in one-letter code: Oxidoreductase clz16 (293 aa).

The protein belongs to the asaB hydroxylase/desaturase family.

Its pathway is secondary metabolite biosynthesis. Oxidoreductase; part of the gene cluster that mediates the biosynthesis of squalestatin S1 (SQS1, also known as zaragozic acid A), a heavily oxidized fungal polyketide that offers potent cholesterol lowering activity by targeting squalene synthase (SS). SQS1 is composed of a 2,8-dioxobicyclic[3.2.1]octane-3,4,5-tricarboxyclic acid core that is connected to two lipophilic polyketide arms. These initial steps feature the priming of an unusual benzoic acid starter unit onto the highly reducing polyketide synthase clz14, followed by oxaloacetate extension and product release to generate a tricarboxylic acid containing product. The phenylalanine ammonia lyase (PAL) clz10 and the acyl-CoA ligase clz12 are involved in transforming phenylalanine into benzoyl-CoA. The citrate synthase-like protein clz17 is involved in connecting the C-alpha-carbons of the hexaketide chain and oxaloacetate to afford the tricarboxylic acid unit. The potential hydrolytic enzymes, clz11 and clz13, are in close proximity to pks2 and may participate in product release. On the other side, the tetraketide arm is synthesized by a the squalestatin tetraketide synthase clz2 and enzymatically esterified to the core in the last biosynthetic step, by the acetyltransferase clz6. The biosynthesis of the tetraketide must involve 3 rounds of chain extension. After the first and second rounds methyl-transfer occurs, and in all rounds of extension the ketoreductase and dehydratase are active. The enoyl reductase and C-MeT of clz2 are not active in the final round of extension. The acetyltransferase clz6 appears to have a broad substrate selectivity for its acyl CoA substrate, allowing the in vitro synthesis of novel squalestatins. The biosynthesis of SQS1 requires several oxidative steps likely performed by oxidoreductases clz3, clz15 and clz16. Finally, in support of the identification of the cluster as being responsible for SQS1 production, the cluster contains a gene encoding a putative squalene synthase (SS) clz20, suggesting a likely mechanism for self-resistance. In Cochliobolus lunatus (Filamentous fungus), this protein is Oxidoreductase clz16.